The chain runs to 278 residues: uncharacterized protein (278 aa).

The signal sequence occupies residues 1–20 (MSPLIVGTLIIILLSGLATA). Residue Gly-96 is the site of GPI-anchor amidated glycine attachment. Positions 97 to 278 (TFLTSPTAKR…QLIMQTFNGS (182 aa)) are cleaved as a propeptide — removed in mature form.

It localises to the cell membrane. This is an uncharacterized protein from Schizosaccharomyces pombe (strain 972 / ATCC 24843) (Fission yeast).